Consider the following 252-residue polypeptide: MMDCRDASACQGVGSLCFFPYLNPLVSWHALVLGHLLYLFVVFVMRSIMRGRRALNMSRVLVVYNVLQICLSAAMAINLSPPLKNGVFNLSGKFCPDIEFWMFVHYCSKYIDMLDTVFILCKKKEDQLSFLHVYHHCTIGLIWGILLRNGLANGTAFFGTWINSSVHFLMYSHYLWTSLGYRNPFKFLLTKIQMLQFSLCILHAILVTLLDTQFTLGWNLLQLLYNASLLVLFLNFYMNSRGKGCAIEKKPQ.

The helical transmembrane segment at 25–45 (LVSWHALVLGHLLYLFVVFVM) threads the bilayer. N-linked (GlcNAc...) asparagine glycosylation occurs at Asn-56. Residues 60-80 (VLVVYNVLQICLSAAMAINLS) traverse the membrane as a helical segment. A glycan (N-linked (GlcNAc...) asparagine) is linked at Asn-89. The next 5 membrane-spanning stretches (helical) occupy residues 100 to 120 (FWMF…VFIL), 127 to 147 (QLSF…GILL), 150 to 170 (GLAN…HFLM), 187 to 207 (FLLT…AILV), and 214 to 234 (FTLG…VLFL). Positions 132–136 (HVYHH) match the HxxHH motif motif. Residue His-135 is the Nucleophile of the active site.

The protein belongs to the ELO family.

The protein localises to the membrane. The enzyme catalyses (5Z,8Z,11Z,14Z)-eicosatetraenoyl-CoA + malonyl-CoA + H(+) = (7Z,10Z,13Z,16Z)-3-oxodocosatetraenoyl-CoA + CO2 + CoA. The protein operates within lipid metabolism; fatty acid biosynthesis. Its function is as follows. Involved in the synthesis of fatty acids. Elongates arachidonate and other C20 polyunsaturated fatty acids (PUFAs) with a preference for n-6 PUFAs. Not involved in fatty acid synthesis up to C18. The sequence is that of Fatty acid elongase 4 from Trypanosoma brucei brucei (strain 927/4 GUTat10.1).